Reading from the N-terminus, the 451-residue chain is uncharacterized protein (451 aa).

11 consecutive transmembrane segments (helical) span residues 13–33, 41–61, 97–117, 142–162, 174–194, 217–237, 255–275, 299–319, 345–365, 381–401, and 429–449; these read IGFV…WKFP, GGAF…PLLV, ACFL…LYIV, NPVQ…LVVA, AVMM…SLTL, ILFA…VMVT, IVLM…PAVF, LPFG…AALT, WTSG…YGVL, FTVS…FIPL, and LLRF…IGIL.

This sequence belongs to the sodium:neurotransmitter symporter (SNF) (TC 2.A.22) family.

It is found in the cell membrane. Functionally, putative sodium-dependent transporter. This is an uncharacterized protein from Bacillus subtilis (strain 168).